A 437-amino-acid chain; its full sequence is Argininosuccinate lyase (437 aa).

It belongs to the lyase 1 family. Argininosuccinate lyase subfamily.

It is found in the cytoplasm. The enzyme catalyses 2-(N(omega)-L-arginino)succinate = fumarate + L-arginine. It participates in amino-acid biosynthesis; L-arginine biosynthesis; L-arginine from L-ornithine and carbamoyl phosphate: step 3/3. This chain is Argininosuccinate lyase, found in Clostridium acetobutylicum (strain ATCC 824 / DSM 792 / JCM 1419 / IAM 19013 / LMG 5710 / NBRC 13948 / NRRL B-527 / VKM B-1787 / 2291 / W).